The sequence spans 203 residues: Recombination protein RecR (203 aa).

The C4-type zinc-finger motif lies at 56-71; the sequence is CEVCGNVSDADRCRIC. The Toprim domain maps to 79-179; the sequence is SLVCVVEEPK…TVTRIASGLP (101 aa).

This sequence belongs to the RecR family.

Its function is as follows. May play a role in DNA repair. It seems to be involved in an RecBC-independent recombinational process of DNA repair. It may act with RecF and RecO. This Mycobacterium sp. (strain JLS) protein is Recombination protein RecR.